The primary structure comprises 89 residues: DNA/RNA-binding protein Alba 2 (89 aa).

Belongs to the histone-like Alba family. In terms of assembly, forms homodimers and homotetramers. Interacts with Alba 1.

It localises to the cytoplasm. The protein localises to the chromosome. Functionally, binds double-stranded DNA tightly but without sequence specificity. Involved in DNA compaction. This is DNA/RNA-binding protein Alba 2 from Archaeoglobus fulgidus (strain ATCC 49558 / DSM 4304 / JCM 9628 / NBRC 100126 / VC-16).